We begin with the raw amino-acid sequence, 529 residues long: Bifunctional purine biosynthesis protein PurH (529 aa).

The 148-residue stretch at 1-148 (MQQRRPVRRA…KNHKDVAIVV (148 aa)) folds into the MGS-like domain. N6-acetyllysine is present on Lys287.

The protein belongs to the PurH family.

The catalysed reaction is (6R)-10-formyltetrahydrofolate + 5-amino-1-(5-phospho-beta-D-ribosyl)imidazole-4-carboxamide = 5-formamido-1-(5-phospho-D-ribosyl)imidazole-4-carboxamide + (6S)-5,6,7,8-tetrahydrofolate. It catalyses the reaction IMP + H2O = 5-formamido-1-(5-phospho-D-ribosyl)imidazole-4-carboxamide. It functions in the pathway purine metabolism; IMP biosynthesis via de novo pathway; 5-formamido-1-(5-phospho-D-ribosyl)imidazole-4-carboxamide from 5-amino-1-(5-phospho-D-ribosyl)imidazole-4-carboxamide (10-formyl THF route): step 1/1. It participates in purine metabolism; IMP biosynthesis via de novo pathway; IMP from 5-formamido-1-(5-phospho-D-ribosyl)imidazole-4-carboxamide: step 1/1. The protein is Bifunctional purine biosynthesis protein PurH of Shigella dysenteriae serotype 1 (strain Sd197).